A 789-amino-acid chain; its full sequence is Trimethylamine-oxide aldolase (789 aa).

The protein in the C-terminal section; belongs to the GcvT family.

The enzyme catalyses trimethylamine N-oxide + H(+) = dimethylamine + formaldehyde. Catalyzes the conversion of trimethylamine N-oxide (TMAO) to dimethylamine (DMA) and formaldehyde. The polypeptide is Trimethylamine-oxide aldolase (Ruegeria pomeroyi (strain ATCC 700808 / DSM 15171 / DSS-3) (Silicibacter pomeroyi)).